The chain runs to 558 residues: Phosphatidylserine lipase ABHD16A (558 aa).

Transmembrane regions (helical) follow at residues 60-80 (ILALASVFWSISYYSSPFAFF) and 93-113 (VVPFSHYAGTLLVLLAGVACL). The Cytoplasmic portion of the chain corresponds to 114-558 (RGIGRWTNPQ…AQHFQMPWCL (445 aa)). Residues 281-407 (LVICCEGNAG…LVTRTVRQHL (127 aa)) form the AB hydrolase-1 domain. Residues serine 355, aspartate 430, and histidine 507 each act as charge relay system in the active site.

It belongs to the AB hydrolase superfamily. ABHD16 family.

The protein resides in the membrane. The enzyme catalyses 1-heptadecanoyl-2-(5Z,8Z,11Z,14Z-eicosatetraenoyl)-sn-glycero-3-phosphoserine + H2O = 1-heptadecanoyl-sn-glycero-3-phosphoserine + (5Z,8Z,11Z,14Z)-eicosatetraenoate + H(+). It catalyses the reaction 1-hexadecanoyl-2-(9Z-octadecenoyl)-sn-glycero-3-phospho-L-serine + H2O = 1-hexadecanoyl-sn-glycero-3-phospho-L-serine + (9Z)-octadecenoate + H(+). The catalysed reaction is 1-octadecanoyl-2-(9Z,12Z-octadecadienoyl)-sn-glycero-3-phosphoserine + H2O = 1-octadecanoyl-sn-glycero-3-phosphoserine + (9Z,12Z)-octadecadienoate + H(+). It carries out the reaction 1-heptadecanoyl-2-(5Z,8Z,11Z,14Z-eicosatetraenoyl)-sn-glycero-3-phosphocholine + H2O = 1-heptadecanoyl-sn-glycero-3-phosphocholine + (5Z,8Z,11Z,14Z)-eicosatetraenoate + H(+). The enzyme catalyses 1-hexadecanoyl-2-(9Z-octadecenoyl)-sn-glycero-3-phosphoglycerol + H2O = 1-hexadecanoyl-sn-glycero-3-phosphoglycerol + (9Z)-octadecenoate + H(+). It catalyses the reaction 1-hexadecanoyl-2-(9Z-octadecenoyl)-sn-glycero-3-phospho-(1D-myo-inositol) + H2O = 1-hexadecanoyl-sn-glycero-3-phospho-(1D-myo-inositol) + (9Z)-octadecenoate + H(+). The catalysed reaction is 1-heptadecanoyl-2-(5Z,8Z,11Z,14Z-eicosatetraenoyl)-sn-glycero-3-phosphoethanolamine + H2O = 1-heptadecanoyl-sn-glycero-3-phosphoethanolamine + (5Z,8Z,11Z,14Z)-eicosatetraenoate + H(+). It carries out the reaction 1-hexadecanoyl-2-(9Z-octadecenoyl)-sn-glycero-3-phospho-(1'-sn-glycerol) + H2O = 1-hexadecanoyl-sn-glycero-3-phospho-(1'-sn-glycerol) + (9Z)-octadecenoate + H(+). The enzyme catalyses Hydrolyzes glycerol monoesters of long-chain fatty acids.. It catalyses the reaction 1-tetradecanoylglycerol + H2O = tetradecanoate + glycerol + H(+). The catalysed reaction is 2-hexadecanoylglycerol + H2O = glycerol + hexadecanoate + H(+). It carries out the reaction 1-(9Z-octadecenoyl)-glycerol + H2O = glycerol + (9Z)-octadecenoate + H(+). The enzyme catalyses 2-(9Z-octadecenoyl)-glycerol + H2O = glycerol + (9Z)-octadecenoate + H(+). It catalyses the reaction 2-(9Z,12Z-octadecadienoyl)-glycerol + H2O = (9Z,12Z)-octadecadienoate + glycerol + H(+). The catalysed reaction is 1-(5Z,8Z,11Z,14Z-eicosatetraenoyl)-glycerol + H2O = glycerol + (5Z,8Z,11Z,14Z)-eicosatetraenoate + H(+). It carries out the reaction 2-(5Z,8Z,11Z,14Z-eicosatetraenoyl)-glycerol + H2O = glycerol + (5Z,8Z,11Z,14Z)-eicosatetraenoate + H(+). The enzyme catalyses prostaglandin D2-1-glycerol ester + H2O = prostaglandin D2 + glycerol + H(+). It catalyses the reaction 2-glyceryl-15-deoxy-Delta(12,14)-prostaglandin J2 + H2O = 15-deoxy-Delta(12,14)-prostaglandin J2 + glycerol + H(+). The catalysed reaction is 1-(9Z,12Z-octadecadienoyl)-glycerol + H2O = (9Z,12Z)-octadecadienoate + glycerol + H(+). Phosphatidylserine (PS) lipase that mediates the hydrolysis of phosphatidylserine to generate lysophosphatidylserine (LPS). LPS constitutes a class of signaling lipids that regulates immunological and neurological processes. Has no activity towards diacylglycerol, triacylglycerol or lysophosphatidylserine lipase. Also has monoacylglycerol lipase activity, with preference for 1-(9Z,12Z-octadecadienoyl)-glycerol (1-LG) and 2-glyceryl-15-deoxy-Delta(12,14)-prostaglandin J2 (15d-PGJ(2)-G). The protein is Phosphatidylserine lipase ABHD16A of Rattus norvegicus (Rat).